The primary structure comprises 507 residues: Carnosic acid synthase (507 aa).

A helical transmembrane segment spans residues V6 to W23. Residue C450 coordinates heme.

The protein belongs to the cytochrome P450 family. Heme is required as a cofactor. Expressed in glandular trichomes of young leaves.

It is found in the membrane. It carries out the reaction 11-hydroxyferruginol + 3 reduced [NADPH--hemoprotein reductase] + 3 O2 = carnosate + 3 oxidized [NADPH--hemoprotein reductase] + 4 H2O + 4 H(+). The catalysed reaction is miltiradiene + 2 reduced [NADPH--hemoprotein reductase] + 2 O2 = miltiradien-20-al + 2 oxidized [NADPH--hemoprotein reductase] + 3 H2O + 2 H(+). The enzyme catalyses ferruginol + 3 reduced [NADPH--hemoprotein reductase] + 3 O2 = pisiferate + 3 oxidized [NADPH--hemoprotein reductase] + 4 H2O + 4 H(+). It participates in secondary metabolite biosynthesis; terpenoid biosynthesis. Functionally, monooxygenase involved in the biosynthesis of carnosate, a potent antioxidant labdane-related diterpene natural product. Catalyzes the oxidation of 11-hydroxyferruginol to produce carnosate. Mediates the conversion of miltiradien into miltiradien-20-al. Also involved in the production of pisiferic acid and derivative products from ferruginol. This is Carnosic acid synthase from Rosmarinus officinalis (Rosemary).